Consider the following 195-residue polypeptide: MNPVYSPGSSGVPYANAKGIGYPAGFPMGYAAAAPAYSPNMYPGANPTFQAGYTSGTPYKVSCSPTSGAVPPYSSSPNPYQTAVYPVRSAYPQQSPYAQQGTYYTQPLYAAPPHVIHHTTVVQPNGMPATVYPAPLPPPRGNGVTMGMVAGTTMAMSAGTLLTAHSPTPVAPHPVTVPTYRAPGTPTYSYVPPQW.

Residue Met1 is modified to N-acetylmethionine. The Cytoplasmic segment spans residues 1-18; the sequence is MNPVYSPGSSGVPYANAK. Ser6 carries the phosphoserine modification. A helical membrane pass occupies residues 19–42; that stretch reads GIGYPAGFPMGYAAAAPAYSPNMY. At 43–142 the chain is on the extracellular side; it reads PGANPTFQAG…PAPLPPPRGN (100 aa). An N-linked (GlcNAc...) asparagine glycan is attached at Asn46. A helical transmembrane segment spans residues 143–164; sequence GVTMGMVAGTTMAMSAGTLLTA. Residues 165-195 are Cytoplasmic-facing; sequence HSPTPVAPHPVTVPTYRAPGTPTYSYVPPQW.

Belongs to the FAM168 family. In terms of assembly, may form homodimers. May interact with DAZAP2, FAM168A, PRDX6, RBM6, TMTC1 and YPEL2. Interacts with CDC27. N-glycosylated.

Its subcellular location is the cytoplasm. The protein localises to the perinuclear region. It is found in the cell membrane. It localises to the cell projection. The protein resides in the axon. Functionally, inhibitor of neuronal axonal outgrowth. Acts as a negative regulator of CDC42 and STAT3 and a positive regulator of STMN2. Positive regulator of CDC27. The protein is Myelin-associated neurite-outgrowth inhibitor (FAM168B) of Bos taurus (Bovine).